The chain runs to 264 residues: MKQYLDLMRHVREHGTFKSDRTGTGTYSVFGYQMRFDLAEGFPLVTTKKCHLKSIIHELLWFLQGDTNIKYLKENGVRIWDEWADENGELGPVYGYQWRSWPAPNGESIDQIANLLAMIKKNPDSRRLIVSAWNPALVEQMALPPCHALFQFYVADGKLSCQLYQRSADIFLGVPFNIASYALLTLMVAQVCDLEPGEFIWSGGDCHLYANHLEQADLQLTREPLPLPTMKLNPEVKDLFAFRFEDFELVGYEAHPHIKAPVAV.

Residue R21 coordinates dUMP. Residue H51 coordinates (6R)-5,10-methylene-5,6,7,8-tetrahydrofolate. A dUMP-binding site is contributed by 126–127; that stretch reads RR. Residue C146 is the Nucleophile of the active site. Residues 166–169, N177, and 207–209 contribute to the dUMP site; these read RSAD and HLY. D169 lines the (6R)-5,10-methylene-5,6,7,8-tetrahydrofolate pocket. Residue A263 participates in (6R)-5,10-methylene-5,6,7,8-tetrahydrofolate binding.

Belongs to the thymidylate synthase family. Bacterial-type ThyA subfamily. Homodimer.

It localises to the cytoplasm. The catalysed reaction is dUMP + (6R)-5,10-methylene-5,6,7,8-tetrahydrofolate = 7,8-dihydrofolate + dTMP. Its pathway is pyrimidine metabolism; dTTP biosynthesis. Catalyzes the reductive methylation of 2'-deoxyuridine-5'-monophosphate (dUMP) to 2'-deoxythymidine-5'-monophosphate (dTMP) while utilizing 5,10-methylenetetrahydrofolate (mTHF) as the methyl donor and reductant in the reaction, yielding dihydrofolate (DHF) as a by-product. This enzymatic reaction provides an intracellular de novo source of dTMP, an essential precursor for DNA biosynthesis. This is Thymidylate synthase from Stutzerimonas stutzeri (strain A1501) (Pseudomonas stutzeri).